Consider the following 311-residue polypeptide: Olfactory receptor 6C3 (311 aa).

Over 1-22 (MNHTMVTEFVLLGLSDDPDLQI) the chain is Extracellular. The N-linked (GlcNAc...) asparagine glycan is linked to asparagine 2. A helical membrane pass occupies residues 23 to 43 (VIFLFLFITYILSVTGNLTII). The Cytoplasmic portion of the chain corresponds to 44–51 (TLTFVDSH). The helical transmembrane segment at 52-72 (LQTPMYFFLRNFSFLEISFTT) threads the bilayer. Residues 73–96 (VCIPRFLGAIITRNKTISYNNCAA) lie on the Extracellular side of the membrane. Residues cysteine 94 and cysteine 186 are joined by a disulfide bond. The chain crosses the membrane as a helical span at residues 97-117 (QLFFFIFMGVTEFYILTAMSY). The Cytoplasmic segment spans residues 118 to 136 (DRYVAICKPLHYTSIMNRK). The chain crosses the membrane as a helical span at residues 137-157 (LCTLLVLCAWLSGFLTIFPPL). Residues 158–194 (MLLLQLDYCASNVIDHFACDYFPLLQLSCSDTWLLEV) lie on the Extracellular side of the membrane. Residues 195–214 (IGFYFALVTLLFTLALVILS) form a helical membrane-spanning segment. Residues 215 to 234 (YMYIIRTILRIPSASQRKKA) are Cytoplasmic-facing. The chain crosses the membrane as a helical span at residues 235–255 (FSTCSSHMIVISISYGSCIFM). The Extracellular segment spans residues 256–268 (YANPSAKEKASLT). Residues 269–289 (KGIAILNTSVAPMLNPFIYTL) traverse the membrane as a helical segment. The Cytoplasmic portion of the chain corresponds to 290-311 (RNQQVKQAFKNVVHKVVFYANQ).

The protein belongs to the G-protein coupled receptor 1 family.

Its subcellular location is the cell membrane. In terms of biological role, odorant receptor. The polypeptide is Olfactory receptor 6C3 (OR6C3) (Homo sapiens (Human)).